A 195-amino-acid chain; its full sequence is Thymidine kinase (195 aa).

ATP is bound by residues 8-15 (GLMGSGKS) and 86-89 (DESQ). E87 (proton acceptor) is an active-site residue. Zn(2+) contacts are provided by C146, C151, C184, and H187.

This sequence belongs to the thymidine kinase family. As to quaternary structure, homotetramer.

It is found in the cytoplasm. It catalyses the reaction thymidine + ATP = dTMP + ADP + H(+). The sequence is that of Thymidine kinase (tdk) from Bacillus subtilis subsp. natto.